The primary structure comprises 470 residues: Arginine ADP-riboxanase OspC1 (470 aa).

NAD(+) is bound by residues His138, Gln139, Ser140, Leu144, Ile157, Asn167, Phe183, His201, Phe206, Asp226, and Glu320. Glu320 is an active-site residue. ANK repeat units lie at residues 363-392 (IALQ…ITRQ), 399-431 (HELY…DVNT), and 438-467 (SGDC…TSDN).

This sequence belongs to the OspC family. In terms of assembly, interacts with host calmodulin (CALM1, CALM2 and/or CALM3); specifically interacts with the apo form of calmodulin, preventing calcium-binding.

Its subcellular location is the secreted. The protein localises to the host nucleus. The catalysed reaction is L-arginyl-[protein] + NAD(+) = ADP-riboxanated L-argininyl-[protein] + nicotinamide + NH4(+) + H(+). ADP-riboxanase effector that mediates arginine ADP-riboxanation of host caspases. ADP-riboxanation of host apoptotic caspases (CASP3, CASP8 and CASP9) prevents their activation, thereby inhibiting host cell extrinsic and intrinsic apoptosis. Does not catalyze ADP-riboxanation of host CASP4/CASP11. Independently of its ADP-riboxanase activity, acts as an inhibitor of calcium signaling by inhibiting host calmodulin, preventing activation of the JAK-STAT signaling pathway in response to interferon-beta. Mechanistically, acts by binding to the apo form of calmodulin, preventing calcium-binding and ability to activate host CaMK2 (CAMKII), which is required to stimulate the JAK-STAT signaling pathway in response to interferon-beta. The chain is Arginine ADP-riboxanase OspC1 from Shigella flexneri.